An 81-amino-acid polypeptide reads, in one-letter code: Photosystem I iron-sulfur center (81 aa).

4Fe-4S ferredoxin-type domains lie at 2 to 31 (SHTV…MAPW) and 39 to 68 (VASA…VRVY). C11, C14, C17, C21, C48, C51, C54, and C58 together coordinate [4Fe-4S] cluster.

As to quaternary structure, the eukaryotic PSI reaction center is composed of at least 11 subunits. Requires [4Fe-4S] cluster as cofactor.

The protein resides in the plastid. It is found in the chloroplast thylakoid membrane. It catalyses the reaction reduced [plastocyanin] + hnu + oxidized [2Fe-2S]-[ferredoxin] = oxidized [plastocyanin] + reduced [2Fe-2S]-[ferredoxin]. Functionally, apoprotein for the two 4Fe-4S centers FA and FB of photosystem I (PSI); essential for photochemical activity. FB is the terminal electron acceptor of PSI, donating electrons to ferredoxin. The C-terminus interacts with PsaA/B/D and helps assemble the protein into the PSI complex. Required for binding of PsaD and PsaE to PSI. PSI is a plastocyanin/cytochrome c6-ferredoxin oxidoreductase, converting photonic excitation into a charge separation, which transfers an electron from the donor P700 chlorophyll pair to the spectroscopically characterized acceptors A0, A1, FX, FA and FB in turn. The polypeptide is Photosystem I iron-sulfur center (Tupiella akineta (Green alga)).